The following is a 1480-amino-acid chain: DNA polymerase zeta catalytic subunit (1480 aa).

Positions 403–488 are disordered; the sequence is DRSKFPKSPL…GDTRKAGKRL (86 aa). A compositionally biased stretch (polar residues) spans 411–427; the sequence is PLNSSQEVTIHSSQDRQ. The segment covering 457-468 has biased composition (basic and acidic residues); that stretch reads TKREIEFCRDLP. Residues 470-479 are compositionally biased toward polar residues; it reads RPTSSEPNQG. 4 residues coordinate Zn(2+): cysteine 1381, cysteine 1384, cysteine 1400, and cysteine 1403. The segment at 1381-1403 adopts a CysA-type zinc-finger fold; the sequence is CSSCLKNNIEIIPDKINSLCSDC. Residues cysteine 1432, cysteine 1435, cysteine 1446, and cysteine 1451 each coordinate [4Fe-4S] cluster. A CysB motif motif is present at residues 1432 to 1451; the sequence is CRGCSKLSSSDPVLCKSNSC.

Belongs to the DNA polymerase type-B family. In terms of assembly, forms DNA polymerase zeta with rev7. [4Fe-4S] cluster serves as cofactor.

Its subcellular location is the mitochondrion. The protein resides in the nucleus. It carries out the reaction DNA(n) + a 2'-deoxyribonucleoside 5'-triphosphate = DNA(n+1) + diphosphate. Its function is as follows. Nonessential DNA polymerase. Required for DNA damage induced mutagenesis. Involved in DNA repair, mitochondrial DNA repair and translesion synthesis. Has a role in the bypass of abasic (AP) sites. In Schizosaccharomyces pombe (strain 972 / ATCC 24843) (Fission yeast), this protein is DNA polymerase zeta catalytic subunit (rev3).